The primary structure comprises 130 residues: Small ribosomal subunit protein uS9 (130 aa).

It belongs to the universal ribosomal protein uS9 family.

This Pseudomonas fluorescens (strain ATCC BAA-477 / NRRL B-23932 / Pf-5) protein is Small ribosomal subunit protein uS9.